The primary structure comprises 174 residues: Methylated-DNA--protein-cysteine methyltransferase (174 aa).

The Nucleophile; methyl group acceptor role is filled by Cys144.

Belongs to the MGMT family.

It localises to the cytoplasm. The enzyme catalyses a 6-O-methyl-2'-deoxyguanosine in DNA + L-cysteinyl-[protein] = S-methyl-L-cysteinyl-[protein] + a 2'-deoxyguanosine in DNA. It carries out the reaction a 4-O-methyl-thymidine in DNA + L-cysteinyl-[protein] = a thymidine in DNA + S-methyl-L-cysteinyl-[protein]. Involved in the cellular defense against the biological effects of O6-methylguanine (O6-MeG) and O4-methylthymine (O4-MeT) in DNA. Repairs the methylated nucleobase in DNA by stoichiometrically transferring the methyl group to a cysteine residue in the enzyme. This is a suicide reaction: the enzyme is irreversibly inactivated. The protein is Methylated-DNA--protein-cysteine methyltransferase of Pyrococcus furiosus (strain ATCC 43587 / DSM 3638 / JCM 8422 / Vc1).